A 273-amino-acid chain; its full sequence is Glutamate 5-kinase (273 aa).

Lys-15 provides a ligand contact to ATP. Residues Ser-55, Asp-142, and Asn-158 each contribute to the substrate site. ATP-binding positions include 178-179 (SD) and 220-226 (TGGMLSK).

The protein belongs to the glutamate 5-kinase family.

The protein resides in the cytoplasm. The catalysed reaction is L-glutamate + ATP = L-glutamyl 5-phosphate + ADP. Its pathway is amino-acid biosynthesis; L-proline biosynthesis; L-glutamate 5-semialdehyde from L-glutamate: step 1/2. Catalyzes the transfer of a phosphate group to glutamate to form L-glutamate 5-phosphate. This Streptococcus pyogenes serotype M18 (strain MGAS8232) protein is Glutamate 5-kinase.